We begin with the raw amino-acid sequence, 344 residues long: Arginine N-succinyltransferase (344 aa).

A succinyl-CoA-binding site is contributed by leucine 125. The active-site Proton donor is histidine 229.

The protein belongs to the arginine N-succinyltransferase family.

It carries out the reaction succinyl-CoA + L-arginine = N(2)-succinyl-L-arginine + CoA + H(+). It participates in amino-acid degradation; L-arginine degradation via AST pathway; L-glutamate and succinate from L-arginine: step 1/5. In terms of biological role, catalyzes the transfer of succinyl-CoA to arginine to produce N(2)-succinylarginine. The polypeptide is Arginine N-succinyltransferase (Enterobacter sp. (strain 638)).